A 455-amino-acid polypeptide reads, in one-letter code: UDP-N-acetylmuramate--L-alanine ligase (455 aa).

Gly109 to Thr115 contacts ATP.

Belongs to the MurCDEF family.

It localises to the cytoplasm. The enzyme catalyses UDP-N-acetyl-alpha-D-muramate + L-alanine + ATP = UDP-N-acetyl-alpha-D-muramoyl-L-alanine + ADP + phosphate + H(+). The protein operates within cell wall biogenesis; peptidoglycan biosynthesis. Its function is as follows. Cell wall formation. This is UDP-N-acetylmuramate--L-alanine ligase from Caldicellulosiruptor bescii (strain ATCC BAA-1888 / DSM 6725 / KCTC 15123 / Z-1320) (Anaerocellum thermophilum).